Here is a 349-residue protein sequence, read N- to C-terminus: 5-deoxyribose 1-phosphate isomerase (349 aa).

Substrate contacts are provided by residues 49 to 51 (RGA), arginine 92, and glutamine 199. Aspartate 240 serves as the catalytic Proton donor. 250-251 (NK) lines the substrate pocket.

It belongs to the EIF-2B alpha/beta/delta subunits family. DrdI subfamily.

It carries out the reaction 5-deoxy-alpha-D-ribose 1-phosphate = 5-deoxy-D-ribulose 1-phosphate. It functions in the pathway carbohydrate degradation. In terms of biological role, catalyzes the isomerization of 5-deoxy-alpha-D-ribose 1-phosphate to 5-deoxy-D-ribulose 1-phosphate, as part of a 5-deoxyribose salvage pathway that recycles this toxic radical SAM enzyme by-product to mainstream metabolites. The sequence is that of 5-deoxyribose 1-phosphate isomerase from Clostridium botulinum (strain Kyoto / Type A2).